We begin with the raw amino-acid sequence, 55 residues long: ATP synthase F(0) complex subunit 8 (55 aa).

Residues phenylalanine 10 to valine 32 form a helical membrane-spanning segment.

This sequence belongs to the ATPase protein 8 family. Component of the ATP synthase complex composed at least of ATP5F1A/subunit alpha, ATP5F1B/subunit beta, ATP5MC1/subunit c (homooctomer), MT-ATP6/subunit a, MT-ATP8/subunit 8, ATP5ME/subunit e, ATP5MF/subunit f, ATP5MG/subunit g, ATP5MK/subunit k, ATP5MJ/subunit j, ATP5F1C/subunit gamma, ATP5F1D/subunit delta, ATP5F1E/subunit epsilon, ATP5PF/subunit F6, ATP5PB/subunit b, ATP5PD/subunit d, ATP5PO/subunit OSCP. ATP synthase complex consists of a soluble F(1) head domain (subunits alpha(3) and beta(3)) - the catalytic core - and a membrane F(0) domain - the membrane proton channel (subunits c, a, 8, e, f, g, k and j). These two domains are linked by a central stalk (subunits gamma, delta, and epsilon) rotating inside the F1 region and a stationary peripheral stalk (subunits F6, b, d, and OSCP).

Its subcellular location is the mitochondrion membrane. Its function is as follows. Subunit 8, of the mitochondrial membrane ATP synthase complex (F(1)F(0) ATP synthase or Complex V) that produces ATP from ADP in the presence of a proton gradient across the membrane which is generated by electron transport complexes of the respiratory chain. ATP synthase complex consist of a soluble F(1) head domain - the catalytic core - and a membrane F(1) domain - the membrane proton channel. These two domains are linked by a central stalk rotating inside the F(1) region and a stationary peripheral stalk. During catalysis, ATP synthesis in the catalytic domain of F(1) is coupled via a rotary mechanism of the central stalk subunits to proton translocation. In vivo, can only synthesize ATP although its ATP hydrolase activity can be activated artificially in vitro. Part of the complex F(0) domain. The sequence is that of ATP synthase F(0) complex subunit 8 from Loxigilla noctis (Lesser Antillean bullfinch).